The primary structure comprises 633 residues: Threonine--tRNA ligase (633 aa).

The region spanning 1–61 (MINISFPDGS…DNDCRLRILT (61 aa)) is the TGS domain. Positions 242–533 (DHRKLGKELD…LIEEYAGRFP (292 aa)) are catalytic. C333, H384, and H510 together coordinate Zn(2+).

Belongs to the class-II aminoacyl-tRNA synthetase family. In terms of assembly, homodimer. The cofactor is Zn(2+).

It localises to the cytoplasm. The catalysed reaction is tRNA(Thr) + L-threonine + ATP = L-threonyl-tRNA(Thr) + AMP + diphosphate + H(+). Functionally, catalyzes the attachment of threonine to tRNA(Thr) in a two-step reaction: L-threonine is first activated by ATP to form Thr-AMP and then transferred to the acceptor end of tRNA(Thr). Also edits incorrectly charged L-seryl-tRNA(Thr). The sequence is that of Threonine--tRNA ligase from Rickettsia bellii (strain OSU 85-389).